The chain runs to 346 residues: Beta-ketoacyl-[acyl-carrier-protein] synthase III (346 aa).

Residues cysteine 120 and histidine 256 contribute to the active site. The interval 257–261 (QANIR) is ACP-binding. Asparagine 286 is an active-site residue.

The protein belongs to the thiolase-like superfamily. FabH family. Homodimer.

It localises to the cytoplasm. It catalyses the reaction malonyl-[ACP] + acetyl-CoA + H(+) = 3-oxobutanoyl-[ACP] + CO2 + CoA. It functions in the pathway lipid metabolism; fatty acid biosynthesis. In terms of biological role, catalyzes the condensation reaction of fatty acid synthesis by the addition to an acyl acceptor of two carbons from malonyl-ACP. Catalyzes the first condensation reaction which initiates fatty acid synthesis and may therefore play a role in governing the total rate of fatty acid production. Possesses both acetoacetyl-ACP synthase and acetyl transacylase activities. Its substrate specificity determines the biosynthesis of branched-chain and/or straight-chain of fatty acids. The sequence is that of Beta-ketoacyl-[acyl-carrier-protein] synthase III from Deinococcus geothermalis (strain DSM 11300 / CIP 105573 / AG-3a).